The chain runs to 363 residues: Membrane-bound lytic murein transglycosylase C (363 aa).

The signal sequence occupies residues 1 to 15; it reads MKKYIVFAIIPFLFA. C16 carries N-palmitoyl cysteine lipidation. The S-diacylglycerol cysteine moiety is linked to residue C16.

The protein belongs to the transglycosylase Slt family.

The protein localises to the cell outer membrane. It catalyses the reaction Exolytic cleavage of the (1-&gt;4)-beta-glycosidic linkage between N-acetylmuramic acid (MurNAc) and N-acetylglucosamine (GlcNAc) residues in peptidoglycan, from either the reducing or the non-reducing ends of the peptidoglycan chains, with concomitant formation of a 1,6-anhydrobond in the MurNAc residue.. Murein-degrading enzyme. May play a role in recycling of muropeptides during cell elongation and/or cell division. The protein is Membrane-bound lytic murein transglycosylase C of Histophilus somni (strain 129Pt) (Haemophilus somnus).